Here is a 400-residue protein sequence, read N- to C-terminus: Na(+)/H(+) antiporter NhaA (400 aa).

Transmembrane regions (helical) follow at residues 10 to 30 (FNLE…AMII), 60 to 80 (AHHW…GLEL), 95 to 115 (IILP…VYLF), 126 to 146 (GWAI…SLLG), 155 to 175 (VFLV…IALF), 178 to 198 (NDLS…LYLL), 218 to 238 (VAVL…ALFI), 265 to 285 (GILP…AGFG), 295 to 315 (IAAG…WLIF), 334 to 354 (AALL…LAFA), and 364 to 384 (LGII…LKAT).

The protein belongs to the NhaA Na(+)/H(+) (TC 2.A.33) antiporter family.

It localises to the cell inner membrane. The enzyme catalyses Na(+)(in) + 2 H(+)(out) = Na(+)(out) + 2 H(+)(in). In terms of biological role, na(+)/H(+) antiporter that extrudes sodium in exchange for external protons. The chain is Na(+)/H(+) antiporter NhaA from Psychrobacter cryohalolentis (strain ATCC BAA-1226 / DSM 17306 / VKM B-2378 / K5).